Reading from the N-terminus, the 1167-residue chain is Integrin alpha-E (1167 aa).

A signal peptide spans 1-19 (MKWLFHTLLCMASLKPQGA). At 20 to 1114 (FNLDVDWAWV…IFLKEEETRS (1095 aa)) the chain is on the extracellular side. FG-GAP repeat units lie at residues 27–81 (AWVT…PDEI) and 84–142 (QPVE…LQAQ). N51 carries N-linked (GlcNAc...) asparagine glycosylation. Cystine bridges form between C72/C83 and C130/C164. Residues 149–192 (EGFLDPGAHVDSGDYCRSKGGSTGEEKKSARRRRTVEEEDEEED) are X-domain (extra domain). The tract at residues 163 to 191 (YCRSKGGSTGEEKKSARRRRTVEEEDEEE) is disordered. A VWFA domain is found at 193–382 (GTEIAIVLDG…SKLQQHIVHM (190 aa)). Residues N256, N314, N341, N364, N418, and N437 are each glycosylated (N-linked (GlcNAc...) asparagine). The FG-GAP 3 repeat unit spans residues 383-435 (EGTVGDALQYQLAQTGFSAQILDKGQVLLGTVGAFNWSGGALLYSTQNGRGCF). 4 FG-GAP repeats span residues 438 to 491 (QTAK…REED), 492 to 552 (AFVR…DASF), 555 to 619 (AHTL…GLYD), and 623 to 683 (QQIR…FTPD). Ca(2+) contacts are provided by D514, D516, D518, D522, D578, N580, D582, D586, D646, N648, D650, and D654. The cysteines at positions 698 and 754 are disulfide-linked. N-linked (GlcNAc...) asparagine glycans are attached at residues N718 and N773. Residues C814 and C820 are joined by a disulfide bond. N829 and N846 each carry an N-linked (GlcNAc...) asparagine glycan. The cysteines at positions 884 and 898 are disulfide-linked. N911, N925, N968, and N1013 each carry an N-linked (GlcNAc...) asparagine glycan. Intrachain disulfides connect C998–C1023 and C1031–C1047. Residues N1055 and N1086 are each glycosylated (N-linked (GlcNAc...) asparagine). A helical transmembrane segment spans residues 1115–1137 (LPLIIGSSIGGLLVLVVIIAILF). Residues 1138–1167 (KCGFFKRKYQQLNLESTRRAQLKADSLLQD) lie on the Cytoplasmic side of the membrane. A GFFKR motif motif is present at residues 1140-1144 (GFFKR).

It belongs to the integrin alpha chain family. Heterodimer of an alpha and a beta subunit. The alpha subunit is composed of a heavy and a light chains linked by a disulfide bond. Alpha-E associates with beta-7.

The protein resides in the membrane. In terms of biological role, integrin alpha-E/beta-7 is a receptor for E-cadherin. It mediates adhesion of intra-epithelial T-lymphocytes to epithelial cell monolayers. Mice expressing a null mutation of the alpha-E subunit gene exhibit a marked reduction in the numbers of intraepithelial lymphocytes in the gut and in the development of gut-associated lymphoid aggregates, supporting a specific role for this integrin in mediating retention of lymphocytes in the intestinal wall. The polypeptide is Integrin alpha-E (Itgae) (Mus musculus (Mouse)).